A 117-amino-acid chain; its full sequence is Iron-sulfur cluster insertion protein ErpA (117 aa).

The iron-sulfur cluster site is built by C45, C109, and C111.

This sequence belongs to the HesB/IscA family. Homodimer. Requires iron-sulfur cluster as cofactor.

Required for insertion of 4Fe-4S clusters for at least IspG. This is Iron-sulfur cluster insertion protein ErpA from Blochmanniella pennsylvanica (strain BPEN).